The sequence spans 193 residues: Holliday junction branch migration complex subunit RuvA (193 aa).

The domain I stretch occupies residues Met-1–Leu-64. The interval Thr-65–Leu-139 is domain II. The segment at Leu-139–Ala-143 is flexible linker. The interval Ser-144–Ala-193 is domain III.

Belongs to the RuvA family. In terms of assembly, homotetramer. Forms an RuvA(8)-RuvB(12)-Holliday junction (HJ) complex. HJ DNA is sandwiched between 2 RuvA tetramers; dsDNA enters through RuvA and exits via RuvB. An RuvB hexamer assembles on each DNA strand where it exits the tetramer. Each RuvB hexamer is contacted by two RuvA subunits (via domain III) on 2 adjacent RuvB subunits; this complex drives branch migration. In the full resolvosome a probable DNA-RuvA(4)-RuvB(12)-RuvC(2) complex forms which resolves the HJ.

It is found in the cytoplasm. In terms of biological role, the RuvA-RuvB-RuvC complex processes Holliday junction (HJ) DNA during genetic recombination and DNA repair, while the RuvA-RuvB complex plays an important role in the rescue of blocked DNA replication forks via replication fork reversal (RFR). RuvA specifically binds to HJ cruciform DNA, conferring on it an open structure. The RuvB hexamer acts as an ATP-dependent pump, pulling dsDNA into and through the RuvAB complex. HJ branch migration allows RuvC to scan DNA until it finds its consensus sequence, where it cleaves and resolves the cruciform DNA. The chain is Holliday junction branch migration complex subunit RuvA from Burkholderia thailandensis (strain ATCC 700388 / DSM 13276 / CCUG 48851 / CIP 106301 / E264).